We begin with the raw amino-acid sequence, 234 residues long: MHQSKEERVHRVFEKISAHYDRMNSVISFRRHLKWREDVMRRMNVQKGKRALDVCCGTADWAIALAEAVGPEGEVYGLDFSENMLKVGEQKVKARGLGNVKLIHGNAMQLPFPDNSFDYVTIGFGLRNVPDYMTVLKEMHRVTKPGGMTVCLETSQPTLFGFRQLYYFYFRFIMPLFGKLLAKSYEEYSWLQESAREFPGRDELAEMFREAGFVDVEVKPYTFGVAAMHLGYKR.

S-adenosyl-L-methionine contacts are provided by residues T58, D79, and 106-107 (NA).

Belongs to the class I-like SAM-binding methyltransferase superfamily. MenG/UbiE family.

It carries out the reaction a 2-demethylmenaquinol + S-adenosyl-L-methionine = a menaquinol + S-adenosyl-L-homocysteine + H(+). Its pathway is quinol/quinone metabolism; menaquinone biosynthesis; menaquinol from 1,4-dihydroxy-2-naphthoate: step 2/2. Its function is as follows. Methyltransferase required for the conversion of demethylmenaquinol (DMKH2) to menaquinol (MKH2). This is Demethylmenaquinone methyltransferase from Geobacillus kaustophilus (strain HTA426).